Consider the following 523-residue polypeptide: Cytoplasmic dynein 1 light intermediate chain 1 (523 aa).

A disordered region spans residues M1–G45. Position 74-81 (G74–T81) interacts with ATP. S207 carries the post-translational modification Phosphoserine. At T213 the chain carries Phosphothreonine. Disordered stretches follow at residues P387–M434 and G457–S523. 2 positions are modified to phosphoserine: S398 and S405. Position 408 is a phosphothreonine (T408). A phosphoserine mark is found at S412, S419, S421, and S427. Residues S412 to S421 are compositionally biased toward low complexity. Residues S458–A473 are compositionally biased toward gly residues. The span at G474–A483 shows a compositional bias: low complexity. S486 and S510 each carry phosphoserine. Residues T512 and T513 each carry the phosphothreonine modification. S516 is subject to Phosphoserine.

This sequence belongs to the dynein light intermediate chain family. In terms of assembly, homodimer. The cytoplasmic dynein 1 complex consists of two catalytic heavy chains (HCs) and a number of non-catalytic subunits presented by intermediate chains (ICs), light intermediate chains (LICs) and light chains (LCs); the composition seems to vary in respect to the IC, LIC and LC composition. The heavy chain homodimer serves as a scaffold for the probable homodimeric assembly of the respective non-catalytic subunits. The ICs and LICs bind directly to the HC dimer and the LCs assemble on the IC dimer. Self-associates. Interacts with DYNC1H1; DYNC1LI1 and DYNC1LI2 bind mutually exclusive to DYNC1H1. Interacts with PCNT. Forms a complex with RAB11FIP3 and RAB11A1; the interaction between DYNC1LI1 and RAB11FIP3 is direct and induces DYNC1LI1 localization onto endosomal membrane; the complex regulates endocytic trafficking. Interacts with RUFY3. Post-translationally, phosphorylated during mitosis but not in interphase.

It is found in the cytoplasm. The protein localises to the chromosome. Its subcellular location is the centromere. The protein resides in the kinetochore. It localises to the cytoskeleton. It is found in the spindle pole. The protein localises to the recycling endosome membrane. Functionally, acts as one of several non-catalytic accessory components of the cytoplasmic dynein 1 complex that are thought to be involved in linking dynein to cargos and to adapter proteins that regulate dynein function. Cytoplasmic dynein 1 acts as a motor for the intracellular retrograde motility of vesicles and organelles along microtubules. May play a role in binding dynein to membranous organelles or chromosomes. Probably involved in the microtubule-dependent transport of pericentrin. Is required for progress through the spindle assembly checkpoint. The phosphorylated form appears to be involved in the selective removal of MAD1L1 and MAD1L2 but not BUB1B from kinetochores. Forms a functional Rab11/RAB11FIP3/dynein complex onto endosomal membrane that regulates the movement of peripheral sorting endosomes (SE) along microtubule tracks toward the microtubule organizing center/centrosome, generating the endosomal recycling compartment (ERC). In Rattus norvegicus (Rat), this protein is Cytoplasmic dynein 1 light intermediate chain 1 (Dync1li1).